The sequence spans 397 residues: Ribosomal RNA large subunit methyltransferase I (397 aa).

One can recognise a PUA domain in the interval 2–80 (AIRIKLKPGR…KEETIDADFF (79 aa)).

Belongs to the methyltransferase superfamily. RlmI family.

The protein localises to the cytoplasm. The enzyme catalyses cytidine(1962) in 23S rRNA + S-adenosyl-L-methionine = 5-methylcytidine(1962) in 23S rRNA + S-adenosyl-L-homocysteine + H(+). Specifically methylates the cytosine at position 1962 (m5C1962) of 23S rRNA. This is Ribosomal RNA large subunit methyltransferase I from Shewanella frigidimarina (strain NCIMB 400).